Consider the following 116-residue polypeptide: Ribosome-binding factor A (116 aa).

This sequence belongs to the RbfA family. As to quaternary structure, monomer. Binds 30S ribosomal subunits, but not 50S ribosomal subunits or 70S ribosomes.

The protein resides in the cytoplasm. Its function is as follows. One of several proteins that assist in the late maturation steps of the functional core of the 30S ribosomal subunit. Associates with free 30S ribosomal subunits (but not with 30S subunits that are part of 70S ribosomes or polysomes). Required for efficient processing of 16S rRNA. May interact with the 5'-terminal helix region of 16S rRNA. The sequence is that of Ribosome-binding factor A from Streptococcus sanguinis (strain SK36).